A 194-amino-acid polypeptide reads, in one-letter code: Probable nicotinate-nucleotide adenylyltransferase (194 aa).

It belongs to the NadD family.

The enzyme catalyses nicotinate beta-D-ribonucleotide + ATP + H(+) = deamido-NAD(+) + diphosphate. It participates in cofactor biosynthesis; NAD(+) biosynthesis; deamido-NAD(+) from nicotinate D-ribonucleotide: step 1/1. Functionally, catalyzes the reversible adenylation of nicotinate mononucleotide (NaMN) to nicotinic acid adenine dinucleotide (NaAD). The chain is Probable nicotinate-nucleotide adenylyltransferase from Christiangramia forsetii (strain DSM 17595 / CGMCC 1.15422 / KT0803) (Gramella forsetii).